The following is a 290-amino-acid chain: Fat storage-inducing transmembrane protein 1 (290 aa).

At 1–18 (MERGPVVGAGLGARARIR) the chain is on the lumenal side. A helical transmembrane segment spans residues 19–39 (TLLGCLVKVLLWVASALLYFG). Residues 40-54 (SEQAARLLGSPCLRR) are Cytoplasmic-facing. The chain crosses the membrane as a helical span at residues 55–75 (LYHAWLAAVVIFGPLLQFHVN). The Lumenal portion of the chain corresponds to 76-94 (PRTIFASHGNFFNIKFVNS). A helical membrane pass occupies residues 95 to 115 (AWGWTCTFLGGFVLLVVFLAT). Topologically, residues 116 to 141 (RRVAVTARHLSRLVVGAAVWRGAGRA) are cytoplasmic. A helical transmembrane segment spans residues 142–162 (FLLIEDLTGSCFEPLPQGLLL). Residues 163–187 (HELPDRRSRLAAGHQWRGYTVSSHT) lie on the Lumenal side of the membrane. His-186 is a catalytic residue. The chain crosses the membrane as a helical span at residues 188–208 (FLLTFCCLLMAEEAAVFAKYL). The Cytoplasmic portion of the chain corresponds to 209–220 (AHGLPAGAPLRL). The chain crosses the membrane as a helical span at residues 221–241 (VFLLNVLLLGLWNFLLLCTVI). Over 242-249 (YFHQYTHK) the chain is Lumenal. The active site involves His-244. The helical transmembrane segment at 250–270 (VVGAAVGTFAWYLTYGSWYHQ) threads the bilayer. The Cytoplasmic portion of the chain corresponds to 271-290 (PWSPGSPGHGLFTHPSRKHN).

Belongs to the FIT family. FIT1 subfamily.

It is found in the endoplasmic reticulum membrane. In terms of biological role, plays an important role in the formation of lipid droplets (LDs) which are storage organelles at the center of lipid and energy homeostasis. Directly binds to diacylglycerol (DAGs) and triacylglycerol. This is Fat storage-inducing transmembrane protein 1 from Sus scrofa (Pig).